Here is a 217-residue protein sequence, read N- to C-terminus: Probable transaldolase (217 aa).

Lys-83 (schiff-base intermediate with substrate) is an active-site residue.

Belongs to the transaldolase family. Type 3B subfamily.

Its subcellular location is the cytoplasm. The enzyme catalyses D-sedoheptulose 7-phosphate + D-glyceraldehyde 3-phosphate = D-erythrose 4-phosphate + beta-D-fructose 6-phosphate. It functions in the pathway carbohydrate degradation; pentose phosphate pathway; D-glyceraldehyde 3-phosphate and beta-D-fructose 6-phosphate from D-ribose 5-phosphate and D-xylulose 5-phosphate (non-oxidative stage): step 2/3. Its function is as follows. Transaldolase is important for the balance of metabolites in the pentose-phosphate pathway. The chain is Probable transaldolase from Erythrobacter litoralis (strain HTCC2594).